A 438-amino-acid chain; its full sequence is Xylose isomerase (438 aa).

Residues His-100 and Asp-103 contribute to the active site. Residues Glu-231, Glu-267, His-270, Asp-295, Asp-306, Asp-308, and Asp-338 each contribute to the Mg(2+) site.

Belongs to the xylose isomerase family. Homotetramer. It depends on Mg(2+) as a cofactor.

The protein resides in the cytoplasm. The enzyme catalyses alpha-D-xylose = alpha-D-xylulofuranose. The sequence is that of Xylose isomerase from Pseudomonas savastanoi pv. phaseolicola (strain 1448A / Race 6) (Pseudomonas syringae pv. phaseolicola (strain 1448A / Race 6)).